The sequence spans 1188 residues: Integrin alpha-11 (1188 aa).

An N-terminal signal peptide occupies residues 1-22; sequence MDLPRGLVVAWALSLWPGFTDT. The Extracellular portion of the chain corresponds to 23 to 1141; sequence FNMDTRKPRV…ISKQEDWQVP (1119 aa). FG-GAP repeat units lie at residues 24–85 and 91–151; these read NMDT…NCTK and VTLS…FSKT. Residues cysteine 76 and cysteine 83 are joined by a disulfide bond. N-linked (GlcNAc...) asparagine glycosylation is found at asparagine 82 and asparagine 95. 2 disulfides stabilise this stretch: cysteine 121–cysteine 139 and cysteine 129–cysteine 159. The 182-residue stretch at 164–345 folds into the VWFA domain; sequence DIVIVLDGSN…AALKDIVDAL (182 aa). 5 N-linked (GlcNAc...) asparagine glycosylation sites follow: asparagine 291, asparagine 331, asparagine 358, asparagine 449, and asparagine 462. FG-GAP repeat units lie at residues 355–406, 411–461, 462–527, 528–586, and 590–650; these read TNKN…VIPL, LKEF…TMHN, NRSL…LFVY, NGTL…SILK, and QRIT…FEPS. Positions 488, 490, 492, and 496 each coordinate Ca(2+). Asparagine 528 carries N-linked (GlcNAc...) asparagine glycosylation. The Ca(2+) site is built by aspartate 551, asparagine 553, aspartate 555, aspartate 559, aspartate 613, asparagine 615, aspartate 617, and aspartate 621. An N-linked (GlcNAc...) asparagine glycan is attached at asparagine 642. Disulfide bonds link cysteine 659-cysteine 668, cysteine 674-cysteine 729, and cysteine 781-cysteine 787. An N-linked (GlcNAc...) asparagine glycan is attached at asparagine 694. N-linked (GlcNAc...) asparagine glycosylation occurs at asparagine 857. A disulfide bridge links cysteine 881 with cysteine 893. N-linked (GlcNAc...) asparagine glycosylation is found at asparagine 894, asparagine 973, asparagine 1031, asparagine 1039, and asparagine 1059. The helical transmembrane segment at 1142–1164 threads the bilayer; it reads IWIIVGSTLGGLLLLALLVLALW. Residues 1165 to 1188 are Cytoplasmic-facing; sequence KLGFFRSARRRREPGLDPTPKVLE.

It belongs to the integrin alpha chain family. In terms of assembly, heterodimer of an alpha and a beta subunit. Alpha-11 associates with beta-1. Interacts with RAB21. As to expression, according to PubMed:10464311, highest levels of expression in uterus and heart, intermediate levels in skeletal muscle and intermediate to low levels in pancreas, kidney and placenta. According to PubMed:10486209, also found in brain, colon, lung, small intestine, stomach, testis, salivary glands, thyroid glands and prostate. Very low levels in peripheral blood lymphocytes, fetal brain and fetal liver.

It is found in the membrane. Functionally, integrin alpha-11/beta-1 is a receptor for collagen. This is Integrin alpha-11 (ITGA11) from Homo sapiens (Human).